Consider the following 648-residue polypeptide: Phosphatidylinositol polyphosphate 5-phosphatase type IV (648 aa).

The tract at residues 1 to 64 (MPSKSACLRH…PLSMPAKPSN (64 aa)) is disordered. Over residues 36-54 (TSASLPAADSQSSQTNSMP) the composition is skewed to polar residues. Repeat copies occupy residues 59-62 (PAKP) and 76-79 (PQPP). The tract at residues 59–243 (PAKPSNQNLQ…AHSNLGPSRP (185 aa)) is 4 X 4 AA repeats of P-X-X-P. Residues 99–158 (RFRGSQEDLTVQNGASPCRGSLQDSVAQSPAYSRPLPCLSTSLQEIPKPRRATGSEGGSP) form a disordered region. Position 103 is a phosphoserine (serine 103). Residues 120-129 (LQDSVAQSPA) are compositionally biased toward polar residues. Repeat 3 spans residues 147–150 (PRRA). At threonine 197 the chain carries Phosphothreonine. Residues 240–243 (PSRP) form repeat 4. Phosphoserine occurs at positions 245 and 260. Residue cysteine 645 is modified to Cysteine methyl ester. Residue cysteine 645 is the site of S-farnesyl cysteine attachment. Positions 646 to 648 (TVS) are cleaved as a propeptide — removed in mature form.

The protein belongs to the inositol 1,4,5-trisphosphate 5-phosphatase type IV family. As to quaternary structure, interacts (when prenylated) with PDE6D; this is important for normal location in cilia.

The protein resides in the cytoplasm. It localises to the cytoskeleton. Its subcellular location is the cilium axoneme. The protein localises to the golgi apparatus. It is found in the golgi stack membrane. The protein resides in the cell membrane. It localises to the cell projection. Its subcellular location is the ruffle. The protein localises to the nucleus. The catalysed reaction is a 1,2-diacyl-sn-glycero-3-phospho-(1D-myo-inositol-4,5-bisphosphate) + H2O = a 1,2-diacyl-sn-glycero-3-phospho-(1D-myo-inositol 4-phosphate) + phosphate. It carries out the reaction a 1,2-diacyl-sn-glycero-3-phospho-(1D-myo-inositol-3,4,5-trisphosphate) + H2O = a 1,2-diacyl-sn-glycero-3-phospho-(1D-myo-inositol-3,4-bisphosphate) + phosphate. The enzyme catalyses a 1,2-diacyl-sn-glycero-3-phospho-(1D-myo-inositol-3,5-bisphosphate) + H2O = a 1,2-diacyl-sn-glycero-3-phospho-(1D-myo-inositol-3-phosphate) + phosphate. In terms of biological role, phosphatidylinositol (PtdIns) phosphatase that specifically hydrolyzes the 5-phosphate of phosphatidylinositol-3,4,5-trisphosphate (PtdIns(3,4,5)P3), phosphatidylinositol 4,5-bisphosphate PtdIns (4,5)P2 and phosphatidylinositol 3,5-bisphosphate (PtdIns(3,5)P2). Specific for lipid substrates, inactive towards water soluble inositol phosphates. Plays an essential role in the primary cilium by controlling ciliary growth and phosphoinositide 3-kinase (PI3K) signaling and stability. This Rattus norvegicus (Rat) protein is Phosphatidylinositol polyphosphate 5-phosphatase type IV (Inpp5e).